Reading from the N-terminus, the 295-residue chain is UDP-3-O-acyl-N-acetylglucosamine deacetylase (295 aa).

Residues histidine 75, histidine 232, and aspartate 236 each coordinate Zn(2+). Residue histidine 259 is the Proton donor of the active site.

The protein belongs to the LpxC family. Zn(2+) serves as cofactor.

It catalyses the reaction a UDP-3-O-[(3R)-3-hydroxyacyl]-N-acetyl-alpha-D-glucosamine + H2O = a UDP-3-O-[(3R)-3-hydroxyacyl]-alpha-D-glucosamine + acetate. The protein operates within glycolipid biosynthesis; lipid IV(A) biosynthesis; lipid IV(A) from (3R)-3-hydroxytetradecanoyl-[acyl-carrier-protein] and UDP-N-acetyl-alpha-D-glucosamine: step 2/6. In terms of biological role, catalyzes the hydrolysis of UDP-3-O-myristoyl-N-acetylglucosamine to form UDP-3-O-myristoylglucosamine and acetate, the committed step in lipid A biosynthesis. This Helicobacter pylori (strain ATCC 700392 / 26695) (Campylobacter pylori) protein is UDP-3-O-acyl-N-acetylglucosamine deacetylase.